The primary structure comprises 162 residues: NADH-quinone oxidoreductase subunit I (162 aa).

2 consecutive 4Fe-4S ferredoxin-type domains span residues 53 to 83 (LRRY…IDSE) and 93 to 122 (TRYD…ETRI). Residues Cys-63, Cys-66, Cys-69, Cys-73, Cys-102, Cys-105, Cys-108, and Cys-112 each contribute to the [4Fe-4S] cluster site.

It belongs to the complex I 23 kDa subunit family. In terms of assembly, NDH-1 is composed of 14 different subunits. Subunits NuoA, H, J, K, L, M, N constitute the membrane sector of the complex. It depends on [4Fe-4S] cluster as a cofactor.

It is found in the cell inner membrane. It catalyses the reaction a quinone + NADH + 5 H(+)(in) = a quinol + NAD(+) + 4 H(+)(out). NDH-1 shuttles electrons from NADH, via FMN and iron-sulfur (Fe-S) centers, to quinones in the respiratory chain. The immediate electron acceptor for the enzyme in this species is believed to be ubiquinone. Couples the redox reaction to proton translocation (for every two electrons transferred, four hydrogen ions are translocated across the cytoplasmic membrane), and thus conserves the redox energy in a proton gradient. The sequence is that of NADH-quinone oxidoreductase subunit I from Thiobacillus denitrificans (strain ATCC 25259 / T1).